Consider the following 301-residue polypeptide: Phosphatidylglycerol--prolipoprotein diacylglyceryl transferase (301 aa).

3 helical membrane passes run Leu17–Gly37, Met59–Tyr79, and Gly97–Tyr117. A 1,2-diacyl-sn-glycero-3-phospho-(1'-sn-glycerol) is bound at residue Arg142. Transmembrane regions (helical) follow at residues Met230–Phe250 and Leu265–Trp285.

Belongs to the Lgt family.

It localises to the cell inner membrane. It catalyses the reaction L-cysteinyl-[prolipoprotein] + a 1,2-diacyl-sn-glycero-3-phospho-(1'-sn-glycerol) = an S-1,2-diacyl-sn-glyceryl-L-cysteinyl-[prolipoprotein] + sn-glycerol 1-phosphate + H(+). It participates in protein modification; lipoprotein biosynthesis (diacylglyceryl transfer). Its function is as follows. Catalyzes the transfer of the diacylglyceryl group from phosphatidylglycerol to the sulfhydryl group of the N-terminal cysteine of a prolipoprotein, the first step in the formation of mature lipoproteins. This chain is Phosphatidylglycerol--prolipoprotein diacylglyceryl transferase, found in Paraburkholderia xenovorans (strain LB400).